Consider the following 500-residue polypeptide: LEM protein 2 (500 aa).

The region spanning 1-45 (MVDVEKMSDAELRAELNVRGANVGPVTGTTRSLYEKKLKKLLSGG) is the LEM domain. At 1 to 325 (MVDVEKMSDA…VKQTNIFNEA (325 aa)) the chain is on the nuclear side. Residues 39–202 (KKLLSGGAKT…RRITSVPGLI (164 aa)) form a disordered region. Low complexity predominate over residues 46–57 (AKTPARPTVAKP). The segment covering 58–75 (APKPTPKSAPAPKSPKSP) has biased composition (pro residues). Positions 77–89 (ARRSIPRAAATAA) are enriched in low complexity. Residues 103 to 122 (EEMSDSDDDMRDDDDDDEEI) show a composition bias toward acidic residues. 2 stretches are compositionally biased toward low complexity: residues 130–141 (SSFRSANSTASS) and 168–197 (NTPR…RITS). A helical transmembrane segment spans residues 326–346 (IYFALYVILILFVVLGIAYAL). The Perinuclear space portion of the chain corresponds to 347-378 (TTTHRPKTADFSGYWGVLKAAGRDSLNFFYNY). A helical membrane pass occupies residues 379-399 (AILPVVSLGIFVVLGAGIYFG). Residues 400 to 500 (HRKYKEAKEQ…WIGNQSQKRW (101 aa)) are Nuclear-facing.

Interacts with lmn-1. Interacts (via LEM domain and the C-terminal nuclear domain) with baf-1. Ubiquitous. High expression in germline and intestine.

It is found in the nucleus inner membrane. The protein localises to the nucleus envelope. Its subcellular location is the chromosome. In terms of biological role, nuclear lamina-associated inner nuclear membrane protein that is involved in cell division, nuclear structure organization, maintenance of nuclear envelope integrity and nuclear envelope reformation after mitosis. In interphase cells, plays a role in anchoring and spatial arrangement of chromosome arms at the nuclear periphery, forming so-called lem-2 subdomains. Both arms of autosomes but only the left arm of the X chromosome are anchored in lem-2 subdomains; sequences bound by lem-2 are mainly repetitive chromosome sequences and inactive genes. Involved in chromosome segregation and cell division, probably via its interaction with the nuclear intermediate filament protein lmn-1, the main component of nuclear lamina. Required to organize the distribution of lmn-1, nuclear pore complexes (NPCs) and chromatin in mitotically active cells. Involved in the nuclear positioning and efficient anchoring of microtubule-organizing centers (MTOCs) to the nuclear envelope during mitosis as well as on maintaining correct nuclear morphology. Contributes to closure of nuclear envelope (NE) holes and prevents excess nuclear membranes after meiosis and mitosis. Together with emr-1, plays a role in baf-1 enrichment at the nuclear envelope in anaphase. Together with emr-1, involved in muscle cell attachment to hypodermal cells, as well as muscle cell location and sarcomere organization. May play a role in radiation-induced DNA damage repair response. This Caenorhabditis elegans protein is LEM protein 2 (lem-2).